Here is an 82-residue protein sequence, read N- to C-terminus: Small ribosomal subunit protein uS17 (82 aa).

This sequence belongs to the universal ribosomal protein uS17 family. Part of the 30S ribosomal subunit.

One of the primary rRNA binding proteins, it binds specifically to the 5'-end of 16S ribosomal RNA. This is Small ribosomal subunit protein uS17 from Shewanella halifaxensis (strain HAW-EB4).